The primary structure comprises 291 residues: Ecto-ADP-ribosyltransferase 5 (291 aa).

The N-terminal stretch at 1 to 22 is a signal peptide; it reads MALAALMIALGSLGLHTWQAQA. An intrachain disulfide couples cysteine 42 to cysteine 258. The 191-residue stretch at 62–252 folds into the TR mART core domain; that stretch reads ALLRESWEAA…LVTLWSYNQT (191 aa). Residue tyrosine 99 participates in NAD(+) binding. Asparagine 101 carries N-linked (GlcNAc...) asparagine glycosylation. Arginine 160 and glutamine 180 together coordinate NAD(+). Arginine 160 is a catalytic residue. Serine 183 is a catalytic residue. N-linked (GlcNAc...) asparagine glycosylation occurs at asparagine 196. Serine 214 lines the NAD(+) pocket. Residue glutamate 221 is part of the active site. N-linked (GlcNAc...) asparagine glycosylation is present at asparagine 250.

The protein belongs to the Arg-specific ADP-ribosyltransferase family.

Its subcellular location is the secreted. It catalyses the reaction L-arginyl-[protein] + NAD(+) = N(omega)-(ADP-D-ribosyl)-L-arginyl-[protein] + nicotinamide + H(+). The protein is Ecto-ADP-ribosyltransferase 5 (ART5) of Homo sapiens (Human).